A 217-amino-acid polypeptide reads, in one-letter code: MSIGILGKKLGMSQLFDDDGNAVPVTLIEAGPCRVTQLKTQSLDGYTAIQIGYGVSKDKHLSKPEKGHLLKSGKELLKHLKEFKVEENSSYEIGKEITVTNFEVGQKVDISGKSMGRGFSGYQKRHGFSRGPMSHGSKNHRAPGSTGAGTTPGRIYPGKRMAGRYGGKKITTKGLLVVKIDDQKNLLVVKGSVPGKPGSIVNIRPNNTVGNKGGTKS.

The interval 129–161 (SRGPMSHGSKNHRAPGSTGAGTTPGRIYPGKRM) is disordered. Over residues 142–153 (APGSTGAGTTPG) the composition is skewed to low complexity.

Belongs to the universal ribosomal protein uL3 family. Part of the 50S ribosomal subunit. Forms a cluster with proteins L14 and L19.

Functionally, one of the primary rRNA binding proteins, it binds directly near the 3'-end of the 23S rRNA, where it nucleates assembly of the 50S subunit. The polypeptide is Large ribosomal subunit protein uL3 (Prochlorococcus marinus (strain MIT 9515)).